Here is a 1010-residue protein sequence, read N- to C-terminus: ATP-dependent DNA/RNA helicase DHX36 (1010 aa).

The interval 1-54 is required for recruitment to cytoplasmic stress granules; that stretch reads MSYDYHQNWGRDGGPRSSGGGYGGSYGGSHGGGHGGNRGSGGGGGGGGGRGGRG. The disordered stretch occupies residues 1–63; sequence MSYDYHQNWG…GRHPGHLKGR (63 aa). The tract at residues 1 to 107 is required for the pre-miR-134 transport; sequence MSYDYHQNWG…IVQLLHSVQT (107 aa). The interval 1-202 is necessary for nuclear and nucleolar caps localizations; sequence MSYDYHQNWG…KKTDLRYIEM (202 aa). The span at 16–51 shows a compositional bias: gly residues; sequence RSSGGGYGGSYGGSHGGGHGGNRGSGGGGGGGGGRG. The DSM (DHX36-specific motif) stretch occupies residues 56–78; sequence HPGHLKGREIGLWYAKKQGQKNK. The segment at 56–108 is required for G4-DNA- and G4-RNA-binding; it reads HPGHLKGREIGLWYAKKQGQKNKEAERQERAVVHMDERREEQIVQLLHSVQTK. 2 recA-like domain regions span residues 109–388 and 389–630; these read NDKD…MIHI and PGFT…DYQL. The 171-residue stretch at 219 to 389 folds into the Helicase ATP-binding domain; that stretch reads VNMIDNHQVT…FGNCPMIHIP (171 aa). ATP is bound at residue 235-240; that stretch reads GCGKTT. A necessary for interaction with single-stranded DNA at the 3'-end of the G4-DNA structure region spans residues 267–319; sequence RRISAISVAERVAAERAESCGNGNSTGYQIRLQSRLPRKQGSILYCTTGIILQ. The DEAH box signature appears at 336–339; it reads DEIH. Mg(2+) contacts are provided by E337 and H339. The Helicase C-terminal domain maps to 479-649; sequence ALIRYIVLEE…ELCLQIKILR (171 aa). The necessary for interaction with single-stranded DNA at the 3'-end of the G4-DNA structure stretch occupies residues 500-559; sequence WDNISTLHDLLMSQVMFKSDKFIIIPLHSLMPTVNQTQVFKRTPPGVRKIVIATNIAETS. The Nuclear localization signal signature appears at 519–530; sequence DKFIIIPLHSLM. ATP-binding positions include S559 and 604–607; that span reads RAGR. A WH domain region spans residues 631–700; that stretch reads PEILRTPLEE…LGVHLARLPV (70 aa). 3 necessary for interaction with single-stranded DNA at the 3'-end of the G4-DNA structure regions span residues 640 to 699, 851 to 862, and 872 to 902; these read ELCL…ARLP, NLGKKRKMVKVY, and HPKSVNVEQTEFNYNWLIYHLKMRTSSIYLY. Residues 843–907 form an OB-fold-like subdomains region; the sequence is PKVAKIRLNL…SIYLYDCTEV (65 aa). The residue at position 949 (K949) is an N6-acetyllysine. S965 carries the post-translational modification Phosphoserine.

Found in a multi-helicase-TICAM1 complex at least composed of DHX36, DDX1, DDX21 and TICAM1; this complex exists in resting cells with or without dsRNA poly(I:C) ligand stimulation. Interacts (via C-terminus) with TICAM1 (via TIR domain). Interacts (via C-terminus) with DDX21; this interaction serves as bridges to TICAM1. Interacts with TERT; this interaction is dependent on the ability of DHX36 to bind to the G-quadruplex RNA (G4-RNA) structure present in the telomerase RNA template component (TERC). Interacts with DKC1; this interaction is dependent on the ability of DHX36 to bind to the G4-RNA structure present in TERC. Interacts with PARN; this interaction stimulates PARN to enhance uPA mRNA decay. Interacts with EXOSC3; this interaction occurs in a RNase-insensitive manner. Interacts with EXOSC10; this interaction occurs in a RNase-insensitive manner. Interacts with ILF3; this interaction occurs in a RNA-dependent manner. Interacts with ELAVL1; this interaction occurs in an RNA-dependent manner. Interacts with DDX5; this interaction occurs in a RNA-dependent manner. Interacts with DDX17; this interaction occurs in a RNA-dependent manner. Interacts with HDAC1; this interaction occurs in a RNA-dependent manner. Interacts with HDAC3; this interaction occurs in a RNA-dependent manner. Interacts with HDAC4. Interacts with AGO1. Interacts with AGO2. Interacts with ERCC6. Requires Mg(2+) as cofactor.

The protein resides in the nucleus. It is found in the cytoplasm. The protein localises to the cytosol. Its subcellular location is the stress granule. It localises to the nucleus speckle. The protein resides in the chromosome. It is found in the telomere. The protein localises to the mitochondrion. Its subcellular location is the perikaryon. It localises to the cell projection. The protein resides in the dendrite. It is found in the axon. It catalyses the reaction ATP + H2O = ADP + phosphate + H(+). With respect to regulation, ATPase activity is enhanced in the presence of homomeric poly(U) RNAs, but not by double-stranded DNA (dsDNA), double-stranded RNA (dsRNA) and tRNA. In terms of biological role, multifunctional ATP-dependent helicase that unwinds G-quadruplex (G4) structures. Plays a role in many biological processes such as genomic integrity, gene expression regulations and as a sensor to initiate antiviral responses. G4 structures correspond to helical structures containing guanine tetrads. Binds with high affinity to and unwinds G4 structures that are formed in nucleic acids (G4-DNA and G4-RNA). Plays a role in genomic integrity. Converts the G4-RNA structure present in telomerase RNA template component (TREC) into a double-stranded RNA to promote P1 helix formation that acts as a template boundary ensuring accurate reverse transcription. Plays a role in transcriptional regulation. Resolves G4-DNA structures in promoters of genes, such as YY1, KIT/c-kit and ALPL and positively regulates their expression. Plays a role in post-transcriptional regulation. Unwinds a G4-RNA structure located in the 3'-UTR polyadenylation site of the pre-mRNA TP53 and stimulates TP53 pre-mRNA 3'-end processing in response to ultraviolet (UV)-induced DNA damage. Binds to the precursor-microRNA-134 (pre-miR-134) terminal loop and regulates its transport into the synapto-dendritic compartment. Involved in the pre-miR-134-dependent inhibition of target gene expression and the control of dendritic spine size. Plays a role in the regulation of cytoplasmic mRNA translation and mRNA stability. Binds to both G4-RNA structures and alternative non-quadruplex-forming sequence within the 3'-UTR of the PITX1 mRNA regulating negatively PITX1 protein expression. Binds to both G4-RNA structure in the 5'-UTR and AU-rich elements (AREs) localized in the 3'-UTR of NKX2-5 mRNA to either stimulate protein translation or induce mRNA decay in an ELAVL1-dependent manner, respectively. Also binds to ARE sequences present in several mRNAs mediating exosome-mediated 3'-5' mRNA degradation. Involved in cytoplasmic urokinase-type plasminogen activator (uPA) mRNA decay. Component of a multi-helicase-TICAM1 complex that acts as a cytoplasmic sensor of viral double-stranded RNA (dsRNA) and plays a role in the activation of a cascade of antiviral responses including the induction of pro-inflammatory cytokines via the adapter molecule TICAM1. Required for the early embryonic development and hematopoiesis. Involved in the regulation of cardioblast differentiation and proliferation during heart development. Involved in spermatogonia differentiation. May play a role in ossification. This chain is ATP-dependent DNA/RNA helicase DHX36, found in Bos taurus (Bovine).